The following is a 429-amino-acid chain: Hemoglobinase (429 aa).

Positions 1 to 19 (MMLFSLFLISILHILLVKC) are cleaved as a signal peptide. The propeptide occupies 20–31 (QLDTNYEVSDET). His151 is an active-site residue. The segment at 288-309 (FQGSRDKSSSENDEPPMKPRHS) is disordered. Residues 292–429 (RDKSSSENDE…INEAIIKICG (138 aa)) constitute a propeptide that is removed on maturation.

The protein belongs to the peptidase C13 family.

The catalysed reaction is Hydrolysis of proteins and small molecule substrates at -Asn-|-Xaa- bonds.. In terms of biological role, this protease is used by the parasite for degradation of the host globin. This chain is Hemoglobinase, found in Schistosoma mansoni (Blood fluke).